Consider the following 415-residue polypeptide: Alpha-2Db adrenergic receptor (415 aa).

At 1-33 the chain is on the extracellular side; sequence MDLSTITFLLPNSSEDTNGTSAPRLPPHSQCAS. Residues N12 and N18 are each glycosylated (N-linked (GlcNAc...) asparagine). Residues 34–58 traverse the membrane as a helical segment; it reads VLIVLVVTVIILVTIVGNVLVVVAV. Residues 59 to 70 are Cytoplasmic-facing; it reads FTSRALRAPQNL. Residues 71–96 traverse the membrane as a helical segment; sequence FLVSLAAADILVATLVIPFSLANEVM. The Extracellular portion of the chain corresponds to 97–106; sequence GYWYLGSTWC. A disulfide bridge links C106 with C179. The helical transmembrane segment at 107–129 threads the bilayer; that stretch reads AFYLALDVLFCTSSIVHLCAISL. Topologically, residues 130–150 are cytoplasmic; it reads DRYWSVTKAVSYNLKRTPRRI. Residues 151 to 173 form a helical membrane-spanning segment; that stretch reads KIMITVVWVISAVISFPPLLMTK. Topologically, residues 174–184 are extracellular; the sequence is HDELECLLNNE. An N-linked (GlcNAc...) asparagine glycan is attached at N183. The helical transmembrane segment at 185-208 threads the bilayer; it reads TWYILSSCIVSFFAPGLIMILVYC. The Cytoplasmic portion of the chain corresponds to 209–339; sequence RIYRVAKQRA…QMREKRFTFV (131 aa). Positions 234–299 are disordered; sequence QSETCFVRKG…EGAQSCPKPN (66 aa). A compositionally biased stretch (basic residues) spans 276-286; the sequence is NRHRNSRFAKS. The helical transmembrane segment at 340–363 threads the bilayer; sequence LAVVMGVFVLCWFPFFFTYSLHAI. Over 364-376 the chain is Extracellular; that stretch reads CRKSCTIPDSLFN. The chain crosses the membrane as a helical span at residues 377-397; the sequence is LFFWIGYCNSSVNPIIYTIFN. Over 398-415 the chain is Cytoplasmic; that stretch reads RDFRKAFKKIMCRHSTRT.

This sequence belongs to the G-protein coupled receptor 1 family. Adrenergic receptor subfamily. ADRA2D sub-subfamily.

The protein resides in the cell membrane. In terms of biological role, alpha-2 adrenergic receptors mediate the catecholamine-induced inhibition of adenylate cyclase through the action of G proteins. The order of potency for this receptor is dexmedetomidine &gt; norepinephrine = epinephrine &gt; oxymetazoline. This Danio rerio (Zebrafish) protein is Alpha-2Db adrenergic receptor (adra2db).